A 1260-amino-acid polypeptide reads, in one-letter code: Phosphatidylinositol 3,4,5-trisphosphate 5-phosphatase 2 (1260 aa).

The 97-residue stretch at 25 to 121 (WYHRDLSRAA…GLVCALLLPV (97 aa)) folds into the SH2 domain. A compositionally biased stretch (basic and acidic residues) spans 126–136 (ELDPPDERDAS). Residues 126–178 (ELDPPDERDASDGEDEKPPLPPRSGTSVSAPLGPSSPPAAPEPPTPAVESAPN) are disordered. A Phosphoserine modification is found at Ser-136. The span at 159 to 171 (PSSPPAAPEPPTP) shows a compositional bias: pro residues. Residues Ser-243 and Ser-355 each carry the phosphoserine modification. At Tyr-888 the chain carries Phosphotyrosine. Position 892 is a phosphoserine (Ser-892). The segment at 899–1120 (GAKSKAPSVS…FLGEAAGGDD (222 aa)) is disordered. The segment covering 940 to 952 (PPPTGRPPAPPRA) has biased composition (pro residues). Positions 946–951 (PPAPPR) match the SH3-binding motif. Residues 953 to 967 (APREEPLTPRLKPEG) are compositionally biased toward basic and acidic residues. Thr-960 is modified (phosphothreonine). An NPXY motif motif is present at residues 985–988 (NPAY). Phosphotyrosine is present on Tyr-988. Composition is skewed to pro residues over residues 998–1013 (LLPP…PVPP), 1050–1061 (LPPPDFPPPPLP), and 1090–1108 (LPPP…PLPP). Ser-1133 is modified (phosphoserine). Tyr-1164 is subject to Phosphotyrosine. The tract at residues 1181 to 1200 (EDLAEEAPCPQAGRTGGLGE) is disordered. An SAM domain is found at 1198–1260 (LGEAGMGAWL…LLLDTLQLSK (63 aa)). Ser-1259 bears the Phosphoserine mark.

The protein belongs to the inositol 1,4,5-trisphosphate 5-phosphatase family. Interacts with tyrosine phosphorylated form of SHC1. Interacts with EGFR. Upon stimulation by the EGF signaling pathway, it forms a complex with SHC1 and EGFR. Interacts with cytoskeletal protein SORBS3/vinexin, promoting its localization to the periphery of cells. Forms a complex with filamin (FLNA or FLNB), actin, GPIb (GP1BA or GP1BB) that regulates cortical and submembraneous actin. Interacts with c-Met/MET, when c-Met/MET is phosphorylated on 'Tyr-1356'. Interacts with p130Cas/BCAR1. Interacts with CENTD3/ARAP3 via its SAM domain. Interacts with c-Cbl/CBL and CAP/SORBS1. Interacts with activated EPHA2 receptor. Interacts with receptor FCGR2A. Interacts with receptor FCGR2B. Interacts with tyrosine kinase ABL1. Interacts with tyrosine kinase TEC. Interacts with CSF1R. Interacts (via N-terminus) with SH3YL1 (via SH3 domain). Interacts with FCRL6 (tyrosine phosphorylated form). Interacts (via SH2 domain) with tyrosine phosphorylated KLRC1 (via ITIM). Interacts with NEDD9/HEF1. Post-translationally, tyrosine phosphorylated by the members of the SRC family after exposure to a diverse array of extracellular stimuli such as insulin, growth factors such as EGF or PDGF, chemokines, integrin ligands and hypertonic and oxidative stress. May be phosphorylated upon IgG receptor FCGR2B-binding. Phosphorylated at Tyr-988 following cell attachment and spreading. Phosphorylated at Tyr-1164 following EGF signaling pathway stimulation. In terms of tissue distribution, expressed abundantly in skeletal muscle tissue.

It localises to the cytoplasm. The protein localises to the cytosol. The protein resides in the cytoskeleton. Its subcellular location is the membrane. It is found in the cell projection. It localises to the filopodium. The protein localises to the lamellipodium. The protein resides in the basal cell membrane. Its subcellular location is the nucleus. It is found in the nucleus speckle. It localises to the spindle pole. The enzyme catalyses a 1,2-diacyl-sn-glycero-3-phospho-(1D-myo-inositol-3,4,5-trisphosphate) + H2O = a 1,2-diacyl-sn-glycero-3-phospho-(1D-myo-inositol-3,4-bisphosphate) + phosphate. It catalyses the reaction 1,2-dioctanoyl-sn-glycero-3-phospho-(1D-myo-inositol-3,4,5-trisphosphate) + H2O = 1,2-dioctanoyl-sn-glycero-3-phospho-(1D-myo-inositol-3,4-bisphosphate) + phosphate. It carries out the reaction 1,2-dihexadecanoyl-sn-glycero-3-phospho-(1D-myo-inositol-3,4,5-trisphosphate) + H2O = 1,2-dihexadecanoyl-sn-glycero-3-phospho-(1D-myo-inositol-3,4-bisphosphate) + phosphate. Activated upon translocation to the sites of synthesis of PtdIns(3,4,5)P3 in the membrane. Enzymatic activity is enhanced in the presence of phosphatidylserine. Functionally, phosphatidylinositol (PtdIns) phosphatase that specifically hydrolyzes the 5-phosphate of phosphatidylinositol-3,4,5-trisphosphate (PtdIns(3,4,5)P3) to produce PtdIns(3,4)P2, thereby negatively regulating the PI3K (phosphoinositide 3-kinase) pathways. Required for correct mitotic spindle orientation and therefore progression of mitosis. Plays a central role in regulation of PI3K-dependent insulin signaling, although the precise molecular mechanisms and signaling pathways remain unclear. While overexpression reduces both insulin-stimulated MAP kinase and Akt activation, its absence does not affect insulin signaling or GLUT4 trafficking. Confers resistance to dietary obesity. May act by regulating AKT2, but not AKT1, phosphorylation at the plasma membrane. Part of a signaling pathway that regulates actin cytoskeleton remodeling. Required for the maintenance and dynamic remodeling of actin structures as well as in endocytosis, having a major impact on ligand-induced EGFR internalization and degradation. Participates in regulation of cortical and submembraneous actin by hydrolyzing PtdIns(3,4,5)P3 thereby regulating membrane ruffling. Regulates cell adhesion and cell spreading. Required for HGF-mediated lamellipodium formation, cell scattering and spreading. Acts as a negative regulator of EPHA2 receptor endocytosis by inhibiting via PI3K-dependent Rac1 activation. Acts as a regulator of neuritogenesis by regulating PtdIns(3,4,5)P3 level and is required to form an initial protrusive pattern, and later, maintain proper neurite outgrowth. Acts as a negative regulator of the FC-gamma-RIIA receptor (FCGR2A). Mediates signaling from the FC-gamma-RIIB receptor (FCGR2B), playing a central role in terminating signal transduction from activating immune/hematopoietic cell receptor systems. Involved in EGF signaling pathway. Upon stimulation by EGF, it is recruited by EGFR and dephosphorylates PtdIns(3,4,5)P3. Plays a negative role in regulating the PI3K-PKB pathway, possibly by inhibiting PKB activity. Down-regulates Fc-gamma-R-mediated phagocytosis in macrophages independently of INPP5D/SHIP1. In macrophages, down-regulates NF-kappa-B-dependent gene transcription by regulating macrophage colony-stimulating factor (M-CSF)-induced signaling. Plays a role in the localization of AURKA and NEDD9/HEF1 to the basolateral membrane at interphase in polarized cysts, thereby mediates cell cycle homeostasis, cell polarization and cilia assembly. Additionally promotion of cilia growth is also facilitated by hydrolysis of (PtdIns(3,4,5)P3) to PtdIns(3,4)P2. Promotes formation of apical membrane-initiation sites during the initial stages of lumen formation via Rho family-induced actin filament organization and CTNNB1 localization to cell-cell contacts. May also hydrolyze PtdIns(1,3,4,5)P4, and could thus affect the levels of the higher inositol polyphosphates like InsP6. Involved in endochondral ossification. In Sus scrofa (Pig), this protein is Phosphatidylinositol 3,4,5-trisphosphate 5-phosphatase 2.